The primary structure comprises 53 residues: Conotoxin Cal6.31 (53 aa).

The first 24 residues, 1-24 (MKLTCVLIAAVLLLAVCQLDSADA), serve as a signal peptide directing secretion. 3 disulfide bridges follow: cysteine 29-cysteine 43, cysteine 36-cysteine 47, and cysteine 42-cysteine 51.

Belongs to the conotoxin O1 superfamily. As to expression, expressed by the venom duct.

The protein localises to the secreted. Probable neurotoxin. In Californiconus californicus (California cone), this protein is Conotoxin Cal6.31.